The following is a 1323-amino-acid chain: Lysine-specific demethylase 3A (1323 aa).

Disordered stretches follow at residues 255–287 (TRTGAVKRKSSENNGSSVSKQAKSCSEASPSMC), 307–337 (ATPSSKDPRQQNTPQAANSPPNIGAKLPQGC), and 385–416 (SEPKGSCIQPKTNTDQESRLESAPQPVTGLPK). Residue Ser264 is modified to Phosphoserine. Polar residues-rich tracts occupy residues 266–283 (ENNGSSVSKQAKSCSEAS) and 307–327 (ATPSSKDPRQQNTPQAANSPP). At Ser325 the chain carries Phosphoserine. Ser446 carries the post-translational modification Phosphoserine. Disordered regions lie at residues 468-487 (AEKKVEPSHLGSQSQNLKET) and 495-517 (SCCTRSSNKTQTPPARKSVLTDP). 2 stretches are compositionally biased toward polar residues: residues 477–486 (LGSQSQNLKE) and 495–507 (SCCTRSSNKTQTP). The segment at 662–687 (CDVCDTTIFNLHWVCPRCGFGVCVDC) adopts a C6-type zinc-finger fold. An LXXLL motif motif is present at residues 885-889 (LRNLL). N6-acetyllysine is present on Lys895. A JmjC domain is found at 1060–1283 (MPSRFDDLMA…HCFWLTQEFR (224 aa)). Fe cation is bound by residues His1122, Asp1124, and His1251.

This sequence belongs to the JHDM2 histone demethylase family. As to quaternary structure, interacts with VRK1. It depends on Fe(2+) as a cofactor. Highly expressed in testis (at protein level). Also expressed at high levels in tissues responsive to sympathetic nerve activity such as brown adipose tissue and skeletal muscle.

Its subcellular location is the cytoplasm. It is found in the nucleus. The enzyme catalyses N(6),N(6)-dimethyl-L-lysyl(9)-[histone H3] + 2 2-oxoglutarate + 2 O2 = L-lysyl(9)-[histone H3] + 2 formaldehyde + 2 succinate + 2 CO2. Histone demethylase that specifically demethylates 'Lys-9' of histone H3, thereby playing a central role in histone code. Preferentially demethylates mono- and dimethylated H3 'Lys-9' residue, with a preference for dimethylated residue, while it has weak or no activity on trimethylated H3 'Lys-9'. Demethylation of Lys residue generates formaldehyde and succinate. Involved in hormone-dependent transcriptional activation, by participating in recruitment to androgen-receptor target genes, resulting in H3 'Lys-9' demethylation and transcriptional activation. Involved in spermatogenesis by regulating expression of target genes such as PRM1 and TNP1 which are required for packaging and condensation of sperm chromatin. Involved in obesity resistance through regulation of metabolic genes such as PPARA and UCP1. The polypeptide is Lysine-specific demethylase 3A (Kdm3a) (Mus musculus (Mouse)).